We begin with the raw amino-acid sequence, 206 residues long: Probable GTP-binding protein EngB (206 aa).

An EngB-type G domain is found at 25–198 (SRAEVAFAGR…AVRIEGWLAP (174 aa)). Mg(2+)-binding residues include Ser40 and Thr62.

Belongs to the TRAFAC class TrmE-Era-EngA-EngB-Septin-like GTPase superfamily. EngB GTPase family. It depends on Mg(2+) as a cofactor.

In terms of biological role, necessary for normal cell division and for the maintenance of normal septation. This Thiobacillus denitrificans (strain ATCC 25259 / T1) protein is Probable GTP-binding protein EngB.